The primary structure comprises 110 residues: MSVVIRLARAGTKKRPVYHVVVADSRFPRDGRFIERLGHFNPLLPKDSEARLKLDLDKVKAWVAKGAQPSDRVARFLDAAGVKKREARNNPEKAVPRKERKAAAEAAAKK.

Positions 84–110 (KREARNNPEKAVPRKERKAAAEAAAKK) are disordered.

This sequence belongs to the bacterial ribosomal protein bS16 family.

The polypeptide is Small ribosomal subunit protein bS16 (Rhodopseudomonas palustris (strain BisB18)).